Here is a 160-residue protein sequence, read N- to C-terminus: Large ribosomal subunit protein uL22c (160 aa).

It belongs to the universal ribosomal protein uL22 family. As to quaternary structure, part of the 50S ribosomal subunit.

It localises to the plastid. The protein resides in the chloroplast. Functionally, this protein binds specifically to 23S rRNA. In terms of biological role, the globular domain of the protein is located near the polypeptide exit tunnel on the outside of the subunit, while an extended beta-hairpin is found that lines the wall of the exit tunnel in the center of the 70S ribosome. The polypeptide is Large ribosomal subunit protein uL22c (rpl22) (Nasturtium officinale (Watercress)).